A 173-amino-acid polypeptide reads, in one-letter code: RNA pyrophosphohydrolase (173 aa).

Positions glycine 6–lysine 149 constitute a Nudix hydrolase domain. Positions glycine 38–glycine 59 match the Nudix box motif.

The protein belongs to the Nudix hydrolase family. RppH subfamily. It depends on a divalent metal cation as a cofactor.

In terms of biological role, accelerates the degradation of transcripts by removing pyrophosphate from the 5'-end of triphosphorylated RNA, leading to a more labile monophosphorylated state that can stimulate subsequent ribonuclease cleavage. This chain is RNA pyrophosphohydrolase, found in Shewanella pealeana (strain ATCC 700345 / ANG-SQ1).